We begin with the raw amino-acid sequence, 262 residues long: Ribose-5-phosphate isomerase A (262 aa).

Substrate is bound by residues 33 to 36 (TGST), 89 to 92 (DGAD), and 102 to 105 (KGGG). The active-site Proton acceptor is glutamate 111. Lysine 129 contacts substrate.

The protein belongs to the ribose 5-phosphate isomerase family. In terms of assembly, homodimer.

It carries out the reaction aldehydo-D-ribose 5-phosphate = D-ribulose 5-phosphate. It participates in carbohydrate degradation; pentose phosphate pathway; D-ribose 5-phosphate from D-ribulose 5-phosphate (non-oxidative stage): step 1/1. Its function is as follows. Catalyzes the reversible conversion of ribose-5-phosphate to ribulose 5-phosphate. This is Ribose-5-phosphate isomerase A from Ruegeria sp. (strain TM1040) (Silicibacter sp.).